Reading from the N-terminus, the 80-residue chain is MVELKIACKLDGSCEKPRYRKYKCKVCGWVYDPLKGDPSQNIPPKTPFEELPDTWICPVCRGKVGKESFEPLDEWVEFDE.

A Rubredoxin-like domain is found at 19–72 (YRKYKCKVCGWVYDPLKGDPSQNIPPKTPFEELPDTWICPVCRGKVGKESFEPL). Positions 24, 27, 57, and 60 each coordinate Fe cation.

It belongs to the rubredoxin family. Fe(3+) serves as cofactor.

Rubredoxin is a small nonheme, iron protein lacking acid-labile sulfide. Its single Fe, chelated to 4 Cys, functions as an electron acceptor and may also stabilize the conformation of the molecule. The sequence is that of Probable Rubredoxin-1 from Methanocaldococcus jannaschii (strain ATCC 43067 / DSM 2661 / JAL-1 / JCM 10045 / NBRC 100440) (Methanococcus jannaschii).